A 633-amino-acid polypeptide reads, in one-letter code: Polypeptide N-acetylgalactosaminyltransferase 3 (633 aa).

The Cytoplasmic segment spans residues 1–19; that stretch reads MAHLKRLVKLHIKRHYHRK. A helical; Signal-anchor for type II membrane protein membrane pass occupies residues 20–37; it reads FWKLGAVIFFFLVVLILM. Topologically, residues 38–633 are lumenal; it reads QREVSVQYSK…LQKWIFSQND (596 aa). A disordered region spans residues 112–145; the sequence is DRPPQDSNAPGASGKPFKITHLSPEEQKEKERGE. The span at 134–145 shows a compositional bias: basic and acidic residues; that stretch reads SPEEQKEKERGE. Residues 184 to 293 form a catalytic subdomain A region; that stretch reads LPTTSVIIVF…YGWLEPLLAR (110 aa). Residues Asp277 and His279 each coordinate Mn(2+). Asn297 carries an N-linked (GlcNAc...) asparagine glycan. Positions 356-418 are catalytic subdomain B; it reads PIKTPTFAGG…PCSVVGHVFR (63 aa). Position 415 (His415) interacts with Mn(2+). N-linked (GlcNAc...) asparagine glycosylation is present at Asn484. The Ricin B-type lectin domain occupies 504 to 630; it reads VISGYIKSVG…TDLLQKWIFS (127 aa). A disulfide bridge links Cys517 with Cys535. Residues Asp519, Glu522, His536, and Asn541 each coordinate UDP-N-acetyl-alpha-D-galactosamine. 2 disulfides stabilise this stretch: Cys561–Cys574 and Cys605–Cys618.

The protein belongs to the glycosyltransferase 2 family. GalNAc-T subfamily. Mn(2+) is required as a cofactor. In terms of tissue distribution, highly expressed in the reproductive tract, principally in the testis and uterus, and to a lesser degree in the cervix with only trace levels in the ovary. Also expressed at high level in sublingual gland, stomach and colon, with more moderate amounts present in the submandibular and parotid gland as well as the kidney.

It is found in the golgi apparatus. The protein localises to the golgi stack membrane. The enzyme catalyses L-seryl-[protein] + UDP-N-acetyl-alpha-D-galactosamine = a 3-O-[N-acetyl-alpha-D-galactosaminyl]-L-seryl-[protein] + UDP + H(+). It catalyses the reaction L-threonyl-[protein] + UDP-N-acetyl-alpha-D-galactosamine = a 3-O-[N-acetyl-alpha-D-galactosaminyl]-L-threonyl-[protein] + UDP + H(+). It participates in protein modification; protein glycosylation. Catalyzes the initial reaction in O-linked oligosaccharide biosynthesis, the transfer of an N-acetyl-D-galactosamine residue to a serine or threonine residue on the protein receptor. Has activity toward HIV envelope glycoprotein gp120. Has activity towards EA2, MUC2 and MUC5. Probably glycosylates fibronectin in vivo. Glycosylates FGF23. The polypeptide is Polypeptide N-acetylgalactosaminyltransferase 3 (Galnt3) (Mus musculus (Mouse)).